We begin with the raw amino-acid sequence, 308 residues long: UDP-3-O-acyl-N-acetylglucosamine deacetylase (308 aa).

3 residues coordinate Zn(2+): His-77, His-233, and Asp-237. The active-site Proton donor is His-260.

The protein belongs to the LpxC family. The cofactor is Zn(2+).

It catalyses the reaction a UDP-3-O-[(3R)-3-hydroxyacyl]-N-acetyl-alpha-D-glucosamine + H2O = a UDP-3-O-[(3R)-3-hydroxyacyl]-alpha-D-glucosamine + acetate. Its pathway is glycolipid biosynthesis; lipid IV(A) biosynthesis; lipid IV(A) from (3R)-3-hydroxytetradecanoyl-[acyl-carrier-protein] and UDP-N-acetyl-alpha-D-glucosamine: step 2/6. Its function is as follows. Catalyzes the hydrolysis of UDP-3-O-myristoyl-N-acetylglucosamine to form UDP-3-O-myristoylglucosamine and acetate, the committed step in lipid A biosynthesis. The protein is UDP-3-O-acyl-N-acetylglucosamine deacetylase of Nitratidesulfovibrio vulgaris (strain ATCC 29579 / DSM 644 / CCUG 34227 / NCIMB 8303 / VKM B-1760 / Hildenborough) (Desulfovibrio vulgaris).